The primary structure comprises 758 residues: 5-methyltetrahydropteroyltriglutamate--homocysteine methyltransferase (758 aa).

Residues R17–K20 and K117 each bind 5-methyltetrahydropteroyltri-L-glutamate. Residues I434–S436 and E487 contribute to the L-homocysteine site. L-methionine-binding positions include I434–S436 and E487. Residues R518–C519 and W564 contribute to the 5-methyltetrahydropteroyltri-L-glutamate site. D602 is an L-homocysteine binding site. D602 lines the L-methionine pocket. E608 contributes to the 5-methyltetrahydropteroyltri-L-glutamate binding site. Residues H644, C646, and E668 each contribute to the Zn(2+) site. The active-site Proton donor is H697. Residue C729 coordinates Zn(2+).

The protein belongs to the vitamin-B12 independent methionine synthase family. It depends on Zn(2+) as a cofactor.

The enzyme catalyses 5-methyltetrahydropteroyltri-L-glutamate + L-homocysteine = tetrahydropteroyltri-L-glutamate + L-methionine. It functions in the pathway amino-acid biosynthesis; L-methionine biosynthesis via de novo pathway; L-methionine from L-homocysteine (MetE route): step 1/1. Catalyzes the transfer of a methyl group from 5-methyltetrahydrofolate to homocysteine resulting in methionine formation. The sequence is that of 5-methyltetrahydropteroyltriglutamate--homocysteine methyltransferase from Yersinia pseudotuberculosis serotype I (strain IP32953).